Reading from the N-terminus, the 113-residue chain is Nucleoid-associated protein THA_1374 (113 aa).

The protein belongs to the YbaB/EbfC family. As to quaternary structure, homodimer.

It is found in the cytoplasm. Its subcellular location is the nucleoid. Functionally, binds to DNA and alters its conformation. May be involved in regulation of gene expression, nucleoid organization and DNA protection. In Thermosipho africanus (strain TCF52B), this protein is Nucleoid-associated protein THA_1374.